The following is a 285-amino-acid chain: MLYLTKISNAGSEFTENEQKIADFLQANVSELQSVSSRQMAKQLGISQSSIVKFAQKLGAQGFTELRMALIGEYSASREKTNATALHLHSSITSDDSLEVIARKLNREKELALEQTCALFDYARLQKIIEVISKAPFIQITGLGGSALVGRDLSFKLMKIGYRVACEADTHVQATVSQALKKGDVQIAISYSGSKKEIVLCAEAARKQGATVIAITSLADSPLRRLAHFTLDTVSGETEWRSSSMSTRTAQNSVTDLLFVGLVQLNDVESLKMIQRSSELTQRLK.

The HTH rpiR-type domain occupies 1–77; sequence MLYLTKISNA…MALIGEYSAS (77 aa). A DNA-binding region (H-T-H motif) is located at residues 37 to 56; it reads SRQMAKQLGISQSSIVKFAQ. The SIS domain occupies 128 to 268; it reads IIEVISKAPF…FVGLVQLNDV (141 aa).

In terms of assembly, homotetramer.

It participates in amino-sugar metabolism; N-acetylmuramate degradation [regulation]. Its function is as follows. Represses the expression of the murPQ operon involved in the uptake and degradation of N-acetylmuramic acid (MurNAc). Binds to two adjacent inverted repeats within the operator region. MurNAc 6-phosphate, the substrate of MurQ, is the specific inducer that weakens binding of MurR to the operator. This chain is HTH-type transcriptional regulator MurR, found in Escherichia coli O139:H28 (strain E24377A / ETEC).